A 438-amino-acid chain; its full sequence is Cysteine--tRNA ligase (438 aa).

Cys28 contacts Zn(2+). A 'HIGH' region motif is present at residues 30-40 (PTVYNHLHLGN). Zn(2+) contacts are provided by Cys207, His232, and Glu236. The short motif at 264–268 (KMSKS) is the 'KMSKS' region element. Lys267 serves as a coordination point for ATP.

This sequence belongs to the class-I aminoacyl-tRNA synthetase family. In terms of assembly, monomer. It depends on Zn(2+) as a cofactor.

The protein resides in the cytoplasm. It carries out the reaction tRNA(Cys) + L-cysteine + ATP = L-cysteinyl-tRNA(Cys) + AMP + diphosphate. This Onion yellows phytoplasma (strain OY-M) protein is Cysteine--tRNA ligase.